The sequence spans 156 residues: Small ribosomal subunit protein uS7 (156 aa).

Belongs to the universal ribosomal protein uS7 family. Part of the 30S ribosomal subunit. Contacts proteins S9 and S11.

Its function is as follows. One of the primary rRNA binding proteins, it binds directly to 16S rRNA where it nucleates assembly of the head domain of the 30S subunit. Is located at the subunit interface close to the decoding center, probably blocks exit of the E-site tRNA. This chain is Small ribosomal subunit protein uS7, found in Shewanella sp. (strain ANA-3).